The sequence spans 142 residues: Large ribosomal subunit protein uL11 (142 aa).

This sequence belongs to the universal ribosomal protein uL11 family. As to quaternary structure, part of the ribosomal stalk of the 50S ribosomal subunit. Interacts with L10 and the large rRNA to form the base of the stalk. L10 forms an elongated spine to which L12 dimers bind in a sequential fashion forming a multimeric L10(L12)X complex. One or more lysine residues are methylated.

Its function is as follows. Forms part of the ribosomal stalk which helps the ribosome interact with GTP-bound translation factors. This Idiomarina loihiensis (strain ATCC BAA-735 / DSM 15497 / L2-TR) protein is Large ribosomal subunit protein uL11.